The primary structure comprises 296 residues: Homoserine kinase (296 aa).

86 to 96 (KAGSGLGSSAA) is an ATP binding site.

It belongs to the GHMP kinase family. Homoserine kinase subfamily.

It is found in the cytoplasm. It carries out the reaction L-homoserine + ATP = O-phospho-L-homoserine + ADP + H(+). The protein operates within amino-acid biosynthesis; L-threonine biosynthesis; L-threonine from L-aspartate: step 4/5. Catalyzes the ATP-dependent phosphorylation of L-homoserine to L-homoserine phosphate. This chain is Homoserine kinase (thrB), found in Methanocaldococcus jannaschii (strain ATCC 43067 / DSM 2661 / JAL-1 / JCM 10045 / NBRC 100440) (Methanococcus jannaschii).